The following is a 779-amino-acid chain: Lon protease (779 aa).

The region spanning 10-203 is the Lon N-terminal domain; that stretch reads LPLLPLRGLL…ILLTILNNER (194 aa). ATP is bound at residue 355–362; it reads GPPGVGKT. The region spanning 591 to 772 is the Lon proteolytic domain; that stretch reads KDQVGSVTGL…DEVLRHALTK (182 aa). Active-site residues include Ser-678 and Lys-721.

The protein belongs to the peptidase S16 family. Homohexamer. Organized in a ring with a central cavity.

It localises to the cytoplasm. The enzyme catalyses Hydrolysis of proteins in presence of ATP.. ATP-dependent serine protease that mediates the selective degradation of mutant and abnormal proteins as well as certain short-lived regulatory proteins. Required for cellular homeostasis and for survival from DNA damage and developmental changes induced by stress. Degrades polypeptides processively to yield small peptide fragments that are 5 to 10 amino acids long. Binds to DNA in a double-stranded, site-specific manner. The sequence is that of Lon protease from Brevibacillus choshinensis.